A 256-amino-acid chain; its full sequence is Lysine-rich coiled-coil protein 1 (256 aa).

Disordered stretches follow at residues 62–84 (RLPSGTNHSYPRSCSSSQTEDRV) and 144–256 (TIDP…ILGF). The span at 64–79 (PSGTNHSYPRSCSSSQ) shows a compositional bias: polar residues. 2 stretches are compositionally biased toward basic and acidic residues: residues 161–188 (HVEEGREKQEERPKHERKRSSEEMDLNK) and 218–227 (KTRDVSSKKE). The stretch at 209 to 247 (EKLKNRKEKKTRDVSSKKEDRKRRKEKKEQGEERTEEEM) forms a coiled coil.

The polypeptide is Lysine-rich coiled-coil protein 1 (Krcc1) (Mus musculus (Mouse)).